The following is a 505-amino-acid chain: L-carnitine/gamma-butyrobetaine antiporter (505 aa).

A run of 12 helical transmembrane segments spans residues 10–30 (IEPK…WLTV), 51–71 (WGWA…WLVF), 92–112 (IFMM…SIEI), 143–163 (GPLP…FFFV), 195–215 (FYLV…TPLV), 231–251 (LDAI…ACGL), 263–283 (SYLS…SFIM), 316–336 (WTVF…IFLA), 347–367 (LCFG…TVLG), 403–423 (LSTA…VTLI), 446–466 (LLVR…LLAL), and 475–495 (AIIA…LSFI).

It belongs to the BCCT transporter (TC 2.A.15) family. CaiT subfamily. In terms of assembly, homotrimer.

It is found in the cell inner membrane. It carries out the reaction 4-(trimethylamino)butanoate(in) + (R)-carnitine(out) = 4-(trimethylamino)butanoate(out) + (R)-carnitine(in). The protein operates within amine and polyamine metabolism; carnitine metabolism. Catalyzes the exchange of L-carnitine for gamma-butyrobetaine. This is L-carnitine/gamma-butyrobetaine antiporter from Salmonella gallinarum (strain 287/91 / NCTC 13346).